Here is a 201-residue protein sequence, read N- to C-terminus: MTDPVTLDGEGTIGEFDEKRAENAVRELLIAVGEDPDREGLRETPGRVARAYREIFAGLWQKPEDVLTTTFDIGHDEMVLVKDIEVLSSCEHHLVPFVGVAHVGYIPSTDGKITGLSKLARLVDVYARRPQVQERLTTQVADSLMEILEPRGVIVVVECEHMCMSMRGVRKPGAKTITSAVRGQLRDPATRNEAMSLIMAR.

The Zn(2+) site is built by Cys-90, His-93, and Cys-163.

The protein belongs to the GTP cyclohydrolase I family. As to quaternary structure, toroid-shaped homodecamer, composed of two pentamers of five dimers.

It carries out the reaction GTP + H2O = 7,8-dihydroneopterin 3'-triphosphate + formate + H(+). It participates in cofactor biosynthesis; 7,8-dihydroneopterin triphosphate biosynthesis; 7,8-dihydroneopterin triphosphate from GTP: step 1/1. This Streptomyces avermitilis (strain ATCC 31267 / DSM 46492 / JCM 5070 / NBRC 14893 / NCIMB 12804 / NRRL 8165 / MA-4680) protein is GTP cyclohydrolase 1.